A 694-amino-acid chain; its full sequence is MAKPLQFAPFISEIELPFYSALFASKLDHDKLDDSARSVLGLYEPRSEEPESSCRLQILGNALTSGKTNEPSSPLATMRAEGIIRNVNTLEDFKNTDKPAMLRTAGRQVWDAIKDGSIYSVPSLLSSFIILSYADLKKYKFTYWFAFPALHSDPVWKRSGPAERLTSQETTALVDRVGTWRYSVDARERGFFLAKKVPGRRETDDPDTPQELPFHWEIGSLRDFETGFFDQVPEEDRYVAFTDPSTYPEAPGWPLRNFLILIRHRFRLTKTKVICYRDTWAKRHEAKSVILTIEMDPVENLDITEMPKVTGWARSSNGKLQAQQVNLGEYMDPARLADSSVDLNLKLMKWRIAPNLNLETIKNTKCLLLGAGTLGSYVSRNLMGWGVRKITFVDYGRVSFSNPVRQPLFNFNDCLEGGKPKALRAAEALKEIYPGVDSEGHALSVPMLGHPFTDETKTKEDYQKLEKLINEHDAIFLLMDSRESRWLPTVMGKAAGKIVMNAALGFDSYVVMRHGAETSPEGQTPLGCYFCNDVVAPADSQKDQTLDQQCTVTRPGVAPIASALLVELLTSLLQHPLGKDAPAPQPTSGVIPERDPPDHALGLVPHQIRGYTSTFQQIVIRGQSYDCCSACSPKILNAYRHDGWGFVKRALQEKEYVAELSGLAEVQRRAEEMAAHVDWEEDDDLVDDGEGELI.

The GXGXXG motif motif lies at 370–375 (GAGTLG). Cysteine 550 (glycyl thioester intermediate) is an active-site residue. The tract at residues 650–689 (ALQEKEYVAELSGLAEVQRRAEEMAAHVDWEEDDDLVDDG) is homodimerization.

It belongs to the ATG7 family. As to quaternary structure, homodimer. Interacts with ATG8 through a thioester bond between Cys-550 and the C-terminal 'Gly-116' of ATG8 and with ATG12 through a thioester bond between Cys-550 and the C-terminal 'Gly-160' of ATG12. Also interacts with ATG3.

Its subcellular location is the cytoplasm. It localises to the preautophagosomal structure. Its function is as follows. E1-like activating enzyme involved in the 2 ubiquitin-like systems required for cytoplasm to vacuole transport (Cvt) and autophagy. Activates ATG12 for its conjugation with ATG5 and ATG8 for its conjugation with phosphatidylethanolamine. Both systems are needed for the ATG8 association to Cvt vesicles and autophagosomes membranes. Autophagy is essential for maintenance of amino acid levels and protein synthesis under nitrogen starvation. Required for selective autophagic degradation of the nucleus (nucleophagy) as well as for mitophagy which contributes to regulate mitochondrial quantity and quality by eliminating the mitochondria to a basal level to fulfill cellular energy requirements and preventing excess ROS production. Autophagy is required for proper vegetative growth, asexual/sexual reproduction, and full virulence. Autophagy is particularly involved in the biosynthesis of deoxynivalenol (DON), an important virulence determinant. This Gibberella zeae (strain ATCC MYA-4620 / CBS 123657 / FGSC 9075 / NRRL 31084 / PH-1) (Wheat head blight fungus) protein is Ubiquitin-like modifier-activating enzyme ATG7.